A 256-amino-acid polypeptide reads, in one-letter code: Tryptophan synthase alpha chain (256 aa).

Active-site proton acceptor residues include E51 and D62.

Belongs to the TrpA family. As to quaternary structure, tetramer of two alpha and two beta chains.

The catalysed reaction is (1S,2R)-1-C-(indol-3-yl)glycerol 3-phosphate + L-serine = D-glyceraldehyde 3-phosphate + L-tryptophan + H2O. The protein operates within amino-acid biosynthesis; L-tryptophan biosynthesis; L-tryptophan from chorismate: step 5/5. Functionally, the alpha subunit is responsible for the aldol cleavage of indoleglycerol phosphate to indole and glyceraldehyde 3-phosphate. The chain is Tryptophan synthase alpha chain from Solidesulfovibrio magneticus (strain ATCC 700980 / DSM 13731 / RS-1) (Desulfovibrio magneticus).